The sequence spans 325 residues: Dimethylsulfide dehydrogenase subunit beta (325 aa).

4Fe-4S ferredoxin-type domains are found at residues 6-35, 123-154, and 156-185; these read ISMVLDLNKCIGCQTCTSACKLQWTNRNGR, SYYFYLPRICNHCANPGCLAACARNAIYKRQE, and GIVLVDQERCRGYRYCITACPYKKVYFNEQ. Positions 15, 18, 21, 25, 132, 135, and 140 each coordinate [4Fe-4S] cluster. Positions 144, 165, and 171 each coordinate [3Fe-4S] cluster. The [4Fe-4S] cluster site is built by cysteine 175, cysteine 192, cysteine 195, cysteine 207, and cysteine 211.

In terms of assembly, heterotrimer of alpha, beta and gamma subunits. Requires [3Fe-4S] cluster as cofactor. [4Fe-4S] cluster is required as a cofactor.

Its subcellular location is the periplasm. In terms of biological role, electron transfer subunit of the dehydrogenase during anaerobic growth on dimethyl sulfide. The sequence is that of Dimethylsulfide dehydrogenase subunit beta (ddhB) from Rhodovulum sulfidophilum (Rhodobacter sulfidophilus).